A 122-amino-acid polypeptide reads, in one-letter code: Large ribosomal subunit protein uL14 (122 aa).

It belongs to the universal ribosomal protein uL14 family. Part of the 50S ribosomal subunit. Forms a cluster with proteins L3 and L19. In the 70S ribosome, L14 and L19 interact and together make contacts with the 16S rRNA in bridges B5 and B8.

In terms of biological role, binds to 23S rRNA. Forms part of two intersubunit bridges in the 70S ribosome. This chain is Large ribosomal subunit protein uL14, found in Rhizobium meliloti (strain 1021) (Ensifer meliloti).